Consider the following 202-residue polypeptide: Translation initiation factor IF-3 (202 aa).

It belongs to the IF-3 family. In terms of assembly, monomer.

The protein resides in the cytoplasm. In terms of biological role, IF-3 binds to the 30S ribosomal subunit and shifts the equilibrium between 70S ribosomes and their 50S and 30S subunits in favor of the free subunits, thus enhancing the availability of 30S subunits on which protein synthesis initiation begins. The chain is Translation initiation factor IF-3 from Prochlorococcus marinus (strain MIT 9211).